An 85-amino-acid chain; its full sequence is Toxin CsE8 (85 aa).

Positions 1 to 19 (MNSLLMITACLVLFGTVWS) are cleaved as a signal peptide. One can recognise an LCN-type CS-alpha/beta domain in the interval 20-83 (EKGYLVHEDT…TWPLIGKLCG (64 aa)). 4 disulfides stabilise this stretch: C31-C82, C35-C58, C44-C63, and C48-C65. At C82 the chain carries Cysteine amide.

The protein belongs to the long (4 C-C) scorpion toxin superfamily. Sodium channel inhibitor family. Beta subfamily. Expressed by the venom gland.

It is found in the secreted. Beta toxins bind voltage-independently at site-4 of sodium channels (Nav) and shift the voltage of activation toward more negative potentials thereby affecting sodium channel activation and promoting spontaneous and repetitive firing. This is Toxin CsE8 from Centruroides sculpturatus (Arizona bark scorpion).